We begin with the raw amino-acid sequence, 430 residues long: Long-chain specific acyl-CoA dehydrogenase, mitochondrial (430 aa).

The N-terminal 30 residues, 1–30 (MATRLLRGSLRLWGGLCAPRLPTASRCSHS), are a transit peptide targeting the mitochondrion. An N6-acetyllysine modification is found at Lys-42. Residues Ser-54 and Ser-55 each carry the phosphoserine modification. An N6-acetyllysine; alternate mark is found at Lys-66 and Lys-81. N6-succinyllysine; alternate occurs at positions 66 and 81. An N6-acetyllysine mark is found at Lys-92 and Lys-95. The residue at position 165 (Lys-165) is an N6-succinyllysine. FAD contacts are provided by residues 170–179 (IAMTEPGAGS) and 203–205 (FIT). Residue Ser-179 coordinates substrate. 227-228 (AH) is a substrate binding site. Lys-240 is subject to N6-succinyllysine. N6-acetyllysine; alternate is present on residues Lys-254 and Lys-279. An N6-succinyllysine; alternate mark is found at Lys-254 and Lys-279. Substrate is bound by residues Tyr-282 and 289–292 (PQER). Glu-291 functions as the Proton acceptor in the catalytic mechanism. Arg-317 lines the FAD pocket. Residue Lys-318 is modified to N6-acetyllysine. Lys-322 carries the N6-acetyllysine; alternate modification. An N6-succinyllysine; alternate modification is found at Lys-322. Gln-328 contacts FAD. An N6-acetyllysine modification is found at Lys-358. Ser-362 is modified (phosphoserine). FAD is bound at residue 385 to 389 (QLHGG). 412–413 (GG) contributes to the substrate binding site. 414–416 (TNE) is a binding site for FAD.

It belongs to the acyl-CoA dehydrogenase family. As to quaternary structure, homotetramer. It depends on FAD as a cofactor. Post-translationally, acetylation at Lys-318 and Lys-322 in proximity of the cofactor-binding sites strongly reduces catalytic activity. These sites are deacetylated by SIRT3.

It localises to the mitochondrion matrix. It catalyses the reaction a long-chain 2,3-saturated fatty acyl-CoA + oxidized [electron-transfer flavoprotein] + H(+) = a long-chain (2E)-enoyl-CoA + reduced [electron-transfer flavoprotein]. It carries out the reaction hexanoyl-CoA + oxidized [electron-transfer flavoprotein] + H(+) = (2E)-hexenoyl-CoA + reduced [electron-transfer flavoprotein]. The catalysed reaction is octanoyl-CoA + oxidized [electron-transfer flavoprotein] + H(+) = (2E)-octenoyl-CoA + reduced [electron-transfer flavoprotein]. The enzyme catalyses decanoyl-CoA + oxidized [electron-transfer flavoprotein] + H(+) = (2E)-decenoyl-CoA + reduced [electron-transfer flavoprotein]. It catalyses the reaction dodecanoyl-CoA + oxidized [electron-transfer flavoprotein] + H(+) = (2E)-dodecenoyl-CoA + reduced [electron-transfer flavoprotein]. It carries out the reaction tetradecanoyl-CoA + oxidized [electron-transfer flavoprotein] + H(+) = (2E)-tetradecenoyl-CoA + reduced [electron-transfer flavoprotein]. The catalysed reaction is oxidized [electron-transfer flavoprotein] + hexadecanoyl-CoA + H(+) = (2E)-hexadecenoyl-CoA + reduced [electron-transfer flavoprotein]. The enzyme catalyses octadecanoyl-CoA + oxidized [electron-transfer flavoprotein] + H(+) = (2E)-octadecenoyl-CoA + reduced [electron-transfer flavoprotein]. It catalyses the reaction eicosanoyl-CoA + oxidized [electron-transfer flavoprotein] + H(+) = (2E)-eicosenoyl-CoA + reduced [electron-transfer flavoprotein]. It carries out the reaction docosanoyl-CoA + oxidized [electron-transfer flavoprotein] + H(+) = (2E)-docosenoyl-CoA + reduced [electron-transfer flavoprotein]. The catalysed reaction is tetracosanoyl-CoA + oxidized [electron-transfer flavoprotein] + H(+) = (2E)-tetracosenoyl-CoA + reduced [electron-transfer flavoprotein]. The enzyme catalyses (5E)-tetradecenoyl-CoA + oxidized [electron-transfer flavoprotein] + H(+) = (2E,5E)-tetradecadienoyl-CoA + reduced [electron-transfer flavoprotein]. It catalyses the reaction (5Z)-tetradecenoyl-CoA + oxidized [electron-transfer flavoprotein] + H(+) = (2E,5Z)-tetradecadienoyl-CoA + reduced [electron-transfer flavoprotein]. It carries out the reaction oxidized [electron-transfer flavoprotein] + (9Z)-octadecenoyl-CoA + H(+) = (2E,9Z)-octadecadienoyl-CoA + reduced [electron-transfer flavoprotein]. Its pathway is lipid metabolism; mitochondrial fatty acid beta-oxidation. Long-chain specific acyl-CoA dehydrogenase is one of the acyl-CoA dehydrogenases that catalyze the first step of mitochondrial fatty acid beta-oxidation, an aerobic process breaking down fatty acids into acetyl-CoA and allowing the production of energy from fats. The first step of fatty acid beta-oxidation consists in the removal of one hydrogen from C-2 and C-3 of the straight-chain fatty acyl-CoA thioester, resulting in the formation of trans-2-enoyl-CoA. Among the different mitochondrial acyl-CoA dehydrogenases, long-chain specific acyl-CoA dehydrogenase can act on saturated and unsaturated acyl-CoAs with 6 to 24 carbons with a preference for 8 to 18 carbons long primary chains. This chain is Long-chain specific acyl-CoA dehydrogenase, mitochondrial, found in Sus scrofa (Pig).